The primary structure comprises 532 residues: Telomerase Cajal body protein 1 (532 aa).

The segment at M1–D53 is disordered. Over residues S13–Q25 the composition is skewed to pro residues. Residues S27, S61, and S83 each carry the phosphoserine modification. The interval S80–E122 is disordered. WD repeat units follow at residues R151–Q190, E206–S251, N256–E297, G307–G348, G349–W389, and V395–S434. Residue T474 is modified to Phosphothreonine. S476 carries the phosphoserine modification. Residues D510–S532 are disordered. Residues E520 to S532 are compositionally biased toward basic and acidic residues.

This sequence belongs to the TCAB1 family. Component of the telomerase holoenzyme complex composed of one molecule of TERT, one molecule of WRAP53/TCAB1, two molecules of H/ACA ribonucleoprotein complex subunits DKC1, NOP10, NHP2 and GAR1, and a telomerase RNA template component (TERC). The telomerase holoenzyme complex is associated with TEP1, SMG6/EST1A and POT1. Interacts with the chaperonin-containing T-complex (TRiC) complex; which mediates the folding of WRAP53/TCAB1. Interacts with COIL. Interacts with SMN1. Interacts with RNF8. Interacts with histone H2AX. Phosphorylated at Ser-61 by ATM in response to DNA damage, promoting its interaction with histone H2AX and localization to sites of DNA double-strand breaks.

It localises to the nucleus. The protein resides in the cajal body. It is found in the chromosome. Its subcellular location is the telomere. Its function is as follows. RNA chaperone that plays a key role in telomere maintenance and RNA localization to Cajal bodies. Specifically recognizes and binds the Cajal body box (CAB box) present in both small Cajal body RNAs (scaRNAs) and telomerase RNA template component (TERC). Essential component of the telomerase holoenzyme complex, a ribonucleoprotein complex essential for the replication of chromosome termini that elongates telomeres in most eukaryotes. In the telomerase holoenzyme complex, required to stimulate the catalytic activity of the complex. Acts by specifically binding the CAB box of the TERC RNA and controlling the folding of the CR4/CR5 region of the TERC RNA, a critical step for telomerase activity. In addition, also controls telomerase holoenzyme complex localization to Cajal body. During S phase, required for delivery of TERC to telomeres during S phase and for telomerase activity. In addition to its role in telomere maintenance, also required for Cajal body formation, probably by mediating localization of scaRNAs to Cajal bodies. Also plays a role in DNA repair: phosphorylated by ATM in response to DNA damage and relocalizes to sites of DNA double-strand breaks to promote the repair of DNA double-strand breaks. Acts by recruiting the ubiquitin ligase RNF8 to DNA breaks and promote both homologous recombination (HR) and non-homologous end joining (NHEJ). The chain is Telomerase Cajal body protein 1 from Mus musculus (Mouse).